The chain runs to 441 residues: Phenylalanine-4-hydroxylase (441 aa).

The ACT domain maps to 23–102; it reads FSISKGSDKI…KATTLQESSN (80 aa). The Fe cation site is built by H273, H278, and E318.

The protein belongs to the biopterin-dependent aromatic amino acid hydroxylase family. Homotetramer. Fe(2+) serves as cofactor.

It carries out the reaction (6R)-L-erythro-5,6,7,8-tetrahydrobiopterin + L-phenylalanine + O2 = (4aS,6R)-4a-hydroxy-L-erythro-5,6,7,8-tetrahydrobiopterin + L-tyrosine. The catalysed reaction is (6R)-L-erythro-5,6,7,8-tetrahydrobiopterin + L-tryptophan + O2 = 5-hydroxy-L-tryptophan + (4aS,6R)-4a-hydroxy-L-erythro-5,6,7,8-tetrahydrobiopterin. It functions in the pathway amino-acid degradation; L-phenylalanine degradation; acetoacetate and fumarate from L-phenylalanine: step 1/6. Its function is as follows. Catalyzes the hydroxylation of L-phenylalanine. Hydroxylates L-tryptophan to 5-hydroxy-L-tryptophan but does not hydroxylate L-tyrosine to L-DOPA. It uses D-threo-tetrahydrodictyopterin (DH4), also known as dictyoperin, as a cofactor. The sequence is that of Phenylalanine-4-hydroxylase (pah) from Dictyostelium discoideum (Social amoeba).